Here is a 512-residue protein sequence, read N- to C-terminus: Glycerol kinase (512 aa).

Thr-14 serves as a coordination point for ADP. ATP is bound by residues Thr-14, Thr-15, and Ser-16. Thr-14 contributes to the sn-glycerol 3-phosphate binding site. An ADP-binding site is contributed by Arg-18. Sn-glycerol 3-phosphate-binding residues include Arg-83, Glu-84, Tyr-135, and Asp-244. 5 residues coordinate glycerol: Arg-83, Glu-84, Tyr-135, Asp-244, and Gln-245. ADP contacts are provided by Thr-266, Gly-309, Gly-410, and Asn-414. Residues Thr-266, Gly-309, and Gly-410 each coordinate ATP.

This sequence belongs to the FGGY kinase family.

The enzyme catalyses glycerol + ATP = sn-glycerol 3-phosphate + ADP + H(+). Its pathway is polyol metabolism; glycerol degradation via glycerol kinase pathway; sn-glycerol 3-phosphate from glycerol: step 1/1. With respect to regulation, inhibited by fructose 1,6-bisphosphate (FBP). Functionally, key enzyme in the regulation of glycerol uptake and metabolism. Catalyzes the phosphorylation of glycerol to yield sn-glycerol 3-phosphate. This is Glycerol kinase from Gluconobacter oxydans (strain 621H) (Gluconobacter suboxydans).